Here is a 507-residue protein sequence, read N- to C-terminus: Extracellular elastase (507 aa).

Positions methionine 1–alanine 28 are cleaved as a signal peptide. A propeptide spanning residues lysine 29–glutamate 207 is cleaved from the precursor. Ca(2+) is bound at residue aspartate 347. Histidine 351 contacts Zn(2+). Glutamate 352 is a catalytic residue. Zn(2+) contacts are provided by histidine 355 and glutamate 375. 9 residues coordinate Ca(2+): aspartate 386, glutamate 388, aspartate 389, leucine 391, glutamate 394, tyrosine 397, threonine 398, valine 401, and aspartate 404. Histidine 435 serves as the catalytic Proton donor.

Belongs to the peptidase M4 family. It depends on Ca(2+) as a cofactor. Zn(2+) is required as a cofactor.

The protein resides in the secreted. Protease that has a low substrate specificity. Glucagon is preferentially cleaved between aromatic (Phe) and hydrophobic (Val) amino acids. Hydrolyzes casein and elastin. The protein is Extracellular elastase (sepA) of Staphylococcus epidermidis.